A 1136-amino-acid polypeptide reads, in one-letter code: Tyrosine-protein kinase receptor Tie-1 (1136 aa).

A signal peptide spans 1-23 (MVWLEPPLLLPIFFLASHVGAAV). The Extracellular portion of the chain corresponds to 24-757 (DLTLLADLRL…IHAAEEGLDQ (734 aa)). Residues 43-106 (CVSGEAGAGR…PSDLVGVFSC (64 aa)) enclose the Ig-like C2-type 1 domain. N-linked (GlcNAc...) asparagine glycosylation is found at asparagine 84 and asparagine 159. EGF-like domains follow at residues 212 to 254 (GCEA…TRCE), 256 to 301 (ACRE…SQCQ), and 303 to 343 (ACAP…MHCE). 3 disulfide bridges follow: cysteine 226-cysteine 235, cysteine 229-cysteine 242, and cysteine 244-cysteine 253. Cystine bridges form between cysteine 317–cysteine 325, cysteine 319–cysteine 331, and cysteine 333–cysteine 342. The Ig-like C2-type 2 domain maps to 370-424 (CAAAGNPFPVRGSMELRKPDGTVLLSTKAIVEPDRTTAEFEVPRLALGDSGLWEC). Fibronectin type-III domains follow at residues 444–543 (PPVP…CPEP), 546–640 (KPWL…LPPS), and 644–737 (APRH…TLGN). Asparagine 501, asparagine 594, and asparagine 707 each carry an N-linked (GlcNAc...) asparagine glycan. Residues 758-782 (QLVLAVVGSVSATCLTILAALLTLA) form a helical membrane-spanning segment. Residues 783 to 1136 (CIRKSCLHRR…AGIDATAEEA (354 aa)) are Cytoplasmic-facing. The Protein kinase domain maps to 837 to 1116 (ITFEDLIGEG…RMLEARKAYV (280 aa)). ATP-binding positions include 843–851 (IGEGNFGQV) and lysine 868. Residue aspartate 977 is the Proton acceptor of the active site. Residue tyrosine 1005 is modified to Phosphotyrosine; by autocatalysis.

Belongs to the protein kinase superfamily. Tyr protein kinase family. Tie subfamily. In terms of assembly, heterodimer with TEK/TIE2. Interacts with SVEP1 (via C-terminus). Phosphorylated on tyrosine residues in response to ANGPT1, most likely by TEK/TIE2. As to expression, specifically expressed in developing vascular endothelial cells.

Its subcellular location is the cell membrane. It carries out the reaction L-tyrosyl-[protein] + ATP = O-phospho-L-tyrosyl-[protein] + ADP + H(+). In terms of biological role, transmembrane tyrosine-protein kinase that may modulate TEK/TIE2 activity and contribute to the regulation of angiogenesis. The chain is Tyrosine-protein kinase receptor Tie-1 (TIE1) from Bos taurus (Bovine).